The chain runs to 118 residues: Large ribosomal subunit protein bL19 (118 aa).

It belongs to the bacterial ribosomal protein bL19 family.

Its function is as follows. This protein is located at the 30S-50S ribosomal subunit interface and may play a role in the structure and function of the aminoacyl-tRNA binding site. The sequence is that of Large ribosomal subunit protein bL19 from Frankia casuarinae (strain DSM 45818 / CECT 9043 / HFP020203 / CcI3).